We begin with the raw amino-acid sequence, 602 residues long: Aspartate--tRNA(Asp/Asn) ligase (602 aa).

Glutamate 176 is a binding site for L-aspartate. Residues 200 to 203 (QQFK) form an aspartate region. Residues arginine 222 and histidine 452 each contribute to the L-aspartate site. 222-224 (RDE) is an ATP binding site. Glutamate 490 is a binding site for ATP. Residue arginine 497 coordinates L-aspartate. 542-545 (GIDR) is a binding site for ATP.

The protein belongs to the class-II aminoacyl-tRNA synthetase family. Type 1 subfamily. As to quaternary structure, homodimer.

Its subcellular location is the cytoplasm. It carries out the reaction tRNA(Asx) + L-aspartate + ATP = L-aspartyl-tRNA(Asx) + AMP + diphosphate. In terms of biological role, aspartyl-tRNA synthetase with relaxed tRNA specificity since it is able to aspartylate not only its cognate tRNA(Asp) but also tRNA(Asn). Reaction proceeds in two steps: L-aspartate is first activated by ATP to form Asp-AMP and then transferred to the acceptor end of tRNA(Asp/Asn). The protein is Aspartate--tRNA(Asp/Asn) ligase of Rickettsia akari (strain Hartford).